We begin with the raw amino-acid sequence, 135 residues long: Crustacean hyperglycemic hormones A* (135 aa).

A signal peptide spans 1–26 (MVSFRTMWSVVVVVVVASLASSGVQG). At glutamine 62 the chain carries Pyrrolidone carboxylic acid. 3 disulfide bridges follow: cysteine 68–cysteine 104, cysteine 84–cysteine 100, and cysteine 87–cysteine 113. The residue at position 133 (valine 133) is a Valine amide.

It belongs to the arthropod CHH/MIH/GIH/VIH hormone family. Produced by the medulla terminalis X-organ in the eyestalks and transported to the sinus gland where they are stored and released.

It is found in the secreted. Hormone found in the sinus gland of isopods and decapods which controls the blood sugar level. Has a secretagogue action over the amylase released from the midgut gland. May act as a stress hormone and may be involved in the control of molting and reproduction. This is Crustacean hyperglycemic hormones A* (CHHA*) from Faxonius limosus (Spinycheek crayfish).